The following is an 89-amino-acid chain: Ribonuclease P protein component 1 (89 aa).

It belongs to the eukaryotic/archaeal RNase P protein component 1 family. As to quaternary structure, consists of a catalytic RNA component and at least 4-5 protein subunits.

Its subcellular location is the cytoplasm. It catalyses the reaction Endonucleolytic cleavage of RNA, removing 5'-extranucleotides from tRNA precursor.. In terms of biological role, part of ribonuclease P, a protein complex that generates mature tRNA molecules by cleaving their 5'-ends. The sequence is that of Ribonuclease P protein component 1 from Thermoplasma volcanium (strain ATCC 51530 / DSM 4299 / JCM 9571 / NBRC 15438 / GSS1).